The primary structure comprises 458 residues: ATP synthase subunit beta (458 aa).

148–155 is an ATP binding site; it reads GGAGVGKT.

The protein belongs to the ATPase alpha/beta chains family. F-type ATPases have 2 components, CF(1) - the catalytic core - and CF(0) - the membrane proton channel. CF(1) has five subunits: alpha(3), beta(3), gamma(1), delta(1), epsilon(1). CF(0) has three main subunits: a(1), b(2) and c(9-12). The alpha and beta chains form an alternating ring which encloses part of the gamma chain. CF(1) is attached to CF(0) by a central stalk formed by the gamma and epsilon chains, while a peripheral stalk is formed by the delta and b chains.

The protein resides in the cell inner membrane. The enzyme catalyses ATP + H2O + 4 H(+)(in) = ADP + phosphate + 5 H(+)(out). Its function is as follows. Produces ATP from ADP in the presence of a proton gradient across the membrane. The catalytic sites are hosted primarily by the beta subunits. The chain is ATP synthase subunit beta from Shewanella woodyi (strain ATCC 51908 / MS32).